A 92-amino-acid polypeptide reads, in one-letter code: uncharacterized protein (92 aa).

Residues 1–23 (MNPAIVVIIVLLVAALLIWACKA) form the signal peptide.

This is an uncharacterized protein from Acheta domesticus (House cricket).